The following is a 465-amino-acid chain: Gamma-aminobutyric acid receptor subunit alpha-6 (465 aa).

Positions 1-19 (MALLIAWVCVAVSIEKALG) are cleaved as a signal peptide. The Extracellular portion of the chain corresponds to 20 to 243 (GQGDGGDLYS…FHLQRKMGYF (224 aa)). Asparagine 31 carries N-linked (GlcNAc...) asparagine glycosylation. Position 84 (arginine 84) interacts with 4-aminobutanoate. Asparagine 128 and asparagine 141 each carry an N-linked (GlcNAc...) asparagine glycan. Threonine 147 lines the 4-aminobutanoate pocket. Cysteine 156 and cysteine 170 form a disulfide bridge. Residues 244 to 264 (MIQIYTPCIMTVILSQVSFWI) form a helical membrane-spanning segment. The Cytoplasmic segment spans residues 265-270 (NKESVP). The helical transmembrane segment at 271 to 290 (ARTVFGITTVLTMTTLSISA) threads the bilayer. Residues 291–304 (RHSLPKVSYATAMD) are Extracellular-facing. A helical membrane pass occupies residues 305-325 (WFIAVCFAFVFSALIEFAAVN). At 326-424 (YFTNLQTQRA…GTSKIDQYSR (99 aa)) the chain is on the cytoplasmic side. The disordered stretch occupies residues 392 to 415 (NSASQCQPVSAPPPAPPAPPPVGG). The span at 401–413 (SAPPPAPPAPPPV) shows a compositional bias: pro residues. The helical transmembrane segment at 425-445 (ILFPVAFAGFNLVYWVVYLSK) threads the bilayer. Over 446 to 465 (DTMEFFEPTAMHLRNDHQSN) the chain is Extracellular.

Belongs to the ligand-gated ion channel (TC 1.A.9) family. Gamma-aminobutyric acid receptor (TC 1.A.9.5) subfamily. GABRA6 sub-subfamily. As to quaternary structure, heteropentamer, formed by a combination of alpha (GABRA1-6), beta (GABRB1-3), gamma (GABRG1-3), delta (GABRD), epsilon (GABRE), rho (GABRR1-3), pi (GABRP) and theta (GABRQ) chains, each subunit exhibiting distinct physiological and pharmacological properties. As to expression, expressed in brain, in cerebellar granule cells.

It localises to the postsynaptic cell membrane. The protein localises to the cell membrane. The catalysed reaction is chloride(in) = chloride(out). Functionally, alpha subunit of the heteropentameric ligand-gated chloride channel gated by gamma-aminobutyric acid (GABA), a major inhibitory neurotransmitter in the brain. GABA-gated chloride channels, also named GABA(A) receptors (GABAAR), consist of five subunits arranged around a central pore and contain GABA active binding site(s) located at the alpha and beta subunit interface(s). When activated by GABA, GABAARs selectively allow the flow of chloride anions across the cell membrane down their electrochemical gradient. In Gallus gallus (Chicken), this protein is Gamma-aminobutyric acid receptor subunit alpha-6 (GABRA6).